A 71-amino-acid polypeptide reads, in one-letter code: Dermaseptin-PT9 (71 aa).

The first 22 residues, 1-22 (MAFLKKSLFLVLFLGLVSLSIC), serve as a signal peptide directing secretion. Positions 23 to 43 (EEEKRENEMEQEDDEQSEMKR) are excised as a propeptide. Valine 68 carries the valine amide modification. Positions 69–71 (GEQ) are excised as a propeptide.

It belongs to the frog skin active peptide (FSAP) family. Dermaseptin subfamily. As to expression, expressed by the skin glands.

Its subcellular location is the secreted. It is found in the target cell membrane. Its function is as follows. Antimicrobial peptide with activity against fungi, Gram-positive and Gram-negative bacteria. Is active against S.aureus (MIC=16 uM), MRSA (MIC=32 uM), E.faecalis (MIC=16 uM), E.coli (MIC=8 uM), P.aeruginosa (MIC=16 uM), K.pneumoniae (MIC=8 uM), and C.albicans (MIC=64 uM). Also inhibits biofilm formation. Acts by disrupting cell membranes. Also exhibits anti-proliferative effect against various human cancer cells. Shows weak hemolytic activity towards horse erythrocytes. This is Dermaseptin-PT9 from Phyllomedusa tarsius (Brownbelly leaf frog).